The sequence spans 701 residues: Polyribonucleotide nucleotidyltransferase (701 aa).

2 residues coordinate Mg(2+): Asp490 and Asp496. The KH domain maps to 557 to 616 (PKVETMTIKPEKIRDVIGPGGKKINEIIDETGVKLDIEQDGTIFIGAVDQDMINRAREII). An S1 motif domain is found at 626–694 (GQVYNAKVRR…DKGRVNASHR (69 aa)).

This sequence belongs to the polyribonucleotide nucleotidyltransferase family. It depends on Mg(2+) as a cofactor.

It is found in the cytoplasm. The catalysed reaction is RNA(n+1) + phosphate = RNA(n) + a ribonucleoside 5'-diphosphate. Involved in mRNA degradation. Catalyzes the phosphorolysis of single-stranded polyribonucleotides processively in the 3'- to 5'-direction. This Staphylococcus carnosus (strain TM300) protein is Polyribonucleotide nucleotidyltransferase.